The sequence spans 840 residues: UPF0508 protein SCY_2952 (840 aa).

Belongs to the UPF0508 family.

The sequence is that of UPF0508 protein SCY_2952 from Saccharomyces cerevisiae (strain YJM789) (Baker's yeast).